Here is a 293-residue protein sequence, read N- to C-terminus: ATP synthase gamma chain (293 aa).

Belongs to the ATPase gamma chain family. F-type ATPases have 2 components, CF(1) - the catalytic core - and CF(0) - the membrane proton channel. CF(1) has five subunits: alpha(3), beta(3), gamma(1), delta(1), epsilon(1). CF(0) has three main subunits: a, b and c.

It localises to the cell inner membrane. Produces ATP from ADP in the presence of a proton gradient across the membrane. The gamma chain is believed to be important in regulating ATPase activity and the flow of protons through the CF(0) complex. The sequence is that of ATP synthase gamma chain from Psychrobacter arcticus (strain DSM 17307 / VKM B-2377 / 273-4).